A 277-amino-acid chain; its full sequence is Probable endonuclease 4 (277 aa).

Zn(2+) is bound by residues His70, His108, Glu145, Asp178, His181, His212, Asp225, His227, and Glu257.

The protein belongs to the AP endonuclease 2 family. It depends on Zn(2+) as a cofactor.

The enzyme catalyses Endonucleolytic cleavage to 5'-phosphooligonucleotide end-products.. Endonuclease IV plays a role in DNA repair. It cleaves phosphodiester bonds at apurinic or apyrimidinic (AP) sites, generating a 3'-hydroxyl group and a 5'-terminal sugar phosphate. This is Probable endonuclease 4 from Mycoplasmopsis pulmonis (strain UAB CTIP) (Mycoplasma pulmonis).